Here is a 301-residue protein sequence, read N- to C-terminus: MVADANGSSSSSFNFLIYGKTGWIGGLLGKLCEAQGITYTYGSGRLQDRQSIVADIESVKPSHVFNAAGVTGRPNVDWCESHKVETIRTNVAGTLTLADICREKGLVLINYATGCIFEYDSGHPLGSGIGFKEEDTPNFTGSFYSKTKAMVEELLKNYENVCTLRVRMPISSDLTNPRNFITKIARYEKVVDIPNSMTILDELLPISIEMAKRNLTGIYNFTNPGVVSHNEILEMYRDYIDPSFTWKNFTLEEQAKVIVAPRSNNELDATKLKTEFPELMSIKESLIKFVFEPNKKTEVKA.

NADPH-binding positions include 23–24, 69–71, and Y111; these read WI and GVT.

The protein belongs to the dTDP-4-dehydrorhamnose reductase family. Expressed in roots, leaves, stems and flowers.

It catalyses the reaction dTDP-4-dehydro-6-deoxy-alpha-D-glucose = dTDP-4-dehydro-beta-L-rhamnose. The enzyme catalyses dTDP-beta-L-rhamnose + NADP(+) = dTDP-4-dehydro-beta-L-rhamnose + NADPH + H(+). It participates in carbohydrate biosynthesis; dTDP-L-rhamnose biosynthesis. Bifunctional enzyme involved in dTDP-beta-L-rhamnose biosynthesis. Catalyzes the epimerization of the C3' and C5'positions of dTDP-6-deoxy-4-keto-alpha-D-glucose to form dTDP-4-keto-beta-L-rhamnose and its reduction to yield dTDP-beta-L-rhamnose. Can form UDP-beta-L-rhamnose from UDP-6-deoxy-4-keto-alpha-D-glucose, but cannot convert GDP-4-dehydro-6-deoxy-D-mannose to GDP-fucose. This is Bifunctional dTDP-4-dehydrorhamnose 3,5-epimerase/dTDP-4-dehydrorhamnose reductase from Arabidopsis thaliana (Mouse-ear cress).